Here is a 361-residue protein sequence, read N- to C-terminus: Putative F-box protein At1g33010 (361 aa).

One can recognise an F-box domain in the interval 4-50; that stretch reads GNTLDSIPTDLILEIFSRLSAKSVGRLRCLSKLWRKGEWFFFSSLQP. The tract at residues 308–339 is disordered; that stretch reads SIRPTEQKHKPTSTETSMSRKDHQVRTIDQPQ.

This Arabidopsis thaliana (Mouse-ear cress) protein is Putative F-box protein At1g33010.